A 125-amino-acid chain; its full sequence is Small ribosomal subunit protein uS13 (125 aa).

A disordered region spans residues 95–125 (GLPVNGQRTRTNARTRKGGKKTVANKKKVTK). Residues 105–125 (TNARTRKGGKKTVANKKKVTK) show a composition bias toward basic residues.

It belongs to the universal ribosomal protein uS13 family. As to quaternary structure, part of the 30S ribosomal subunit. Forms a loose heterodimer with protein S19. Forms two bridges to the 50S subunit in the 70S ribosome.

Its function is as follows. Located at the top of the head of the 30S subunit, it contacts several helices of the 16S rRNA. In the 70S ribosome it contacts the 23S rRNA (bridge B1a) and protein L5 of the 50S subunit (bridge B1b), connecting the 2 subunits; these bridges are implicated in subunit movement. Contacts the tRNAs in the A and P-sites. This is Small ribosomal subunit protein uS13 from Leptospira interrogans serogroup Icterohaemorrhagiae serovar copenhageni (strain Fiocruz L1-130).